A 293-amino-acid chain; its full sequence is Protease HtpX (293 aa).

2 helical membrane passes run 4–24 (IALFLLTNLAVMVVFGLVLSL) and 34–54 (GLMIMALLFGFGGSFVSLLMS). Zn(2+) is bound at residue histidine 139. The active site involves glutamate 140. Histidine 143 is a Zn(2+) binding site. 2 helical membrane passes run 158–178 (VVNTFVIFISRILAQLAAGFM) and 193–213 (LIYFAVATVLELVFGILASII). Glutamate 222 provides a ligand contact to Zn(2+).

This sequence belongs to the peptidase M48B family. Requires Zn(2+) as cofactor.

It localises to the cell inner membrane. The protein is Protease HtpX of Escherichia coli O127:H6 (strain E2348/69 / EPEC).